A 366-amino-acid chain; its full sequence is MSEEEQGSGTTTGCGLPSIEQMLAANPGKTPISLLQEYGTRIGKTPVYDLLKAEGQAHQPNFTFRVTVGDTSCTGQGPSKKAAKHKAAEVALKHLKGGSMLEPALEDSSSFSPLDSSLPEDIPVFTAAAAATPVPSVVLTRSPPMELQPPVSPQQSECNPVGALQELVVQKGWRLPEYTVTQESGPAHRKEFTMTCRVERFIEIGSGTSKKLAKRNAAAKMLLRVHTVPLDARDGNEVEPDDDHFSIGVGSRLDGLRNRGPGCTWDSLRNSVGEKILSLRSCSLGSLGALGPACCRVLSELSEEQAFHVSYLDIEELSLSGLCQCLVELSTQPATVCHGSATTREAARGEAARRALQYLKIMAGSK.

Sufficient for interaction with PRKRA stretches follow at residues Met-22–Leu-105, Ser-152–Asp-234, and Leu-287–Lys-366. The DRBM 1 domain maps to Thr-30–Gly-97. Phosphoserine is present on Ser-152. 2 consecutive DRBM domains span residues Asn-159–Thr-227 and Ala-293–Ile-361. A sufficient for interaction with DICER1 region spans residues Val-228–Lys-366.

This sequence belongs to the TARBP2 family. In terms of assembly, self-associates. Component of the RISC loading complex (RLC), or micro-RNA (miRNA) loading complex (miRLC), which is composed of DICER1, AGO2 and TARBP2. Note that the trimeric RLC/miRLC is also referred to as RISC. Interacts with EIF2AK2/PKR and inhibits its protein kinase activity. Interacts with DHX9 and PRKRA. Interacts with DICER1, AGO2, MOV10, EIF6 and RPL7A (60S ribosome subunit); they form a large RNA-induced silencing complex (RISC). Interacts with IRF7; this interaction prevents IRF7 phosphorylation and activation. As to quaternary structure, (Microbial infection) Interacts with FTSJ3; forms a complex with FTSJ3 and HIV-1 TAR RNA. (Microbial infection) Interacts with ebolavirus VP30; this interaction, which occurs only in the presence of siRNA, prevents TARBP2 binding to DICER1 and thus allows the virus to counteract host RNA silencing. In terms of assembly, (Microbial infection) Interacts with ebolavirus VP35; this interaction prevents TARBP2 binding to DICER1 and thus allows the virus to counteract host RNA silencing.

The protein localises to the cytoplasm. It localises to the perinuclear region. The protein resides in the nucleus. Required for formation of the RNA induced silencing complex (RISC). Component of the RISC loading complex (RLC), also known as the micro-RNA (miRNA) loading complex (miRLC), which is composed of DICER1, AGO2 and TARBP2. Within the RLC/miRLC, DICER1 and TARBP2 are required to process precursor miRNAs (pre-miRNAs) to mature miRNAs and then load them onto AGO2. AGO2 bound to the mature miRNA constitutes the minimal RISC and may subsequently dissociate from DICER1 and TARBP2. May also play a role in the production of short interfering RNAs (siRNAs) from double-stranded RNA (dsRNA) by DICER1. Binds in vitro to the PRM1 3'-UTR. Seems to act as a repressor of translation. For some pre-miRNA substrates, may also alter the choice of cleavage site by DICER1. Negatively regulates IRF7-mediated IFN-beta signaling triggered by viral infection by inhibiting the phosphorylation of IRF7 and promoting its 'Lys'-48-linked ubiquitination and degradation. In terms of biological role, (Microbial infection) Binds to the HIV-1 TAR RNA which is located in the long terminal repeat (LTR) of HIV-1, and stimulates translation of TAR-containing RNAs. This is achieved in part at least by binding to and inhibiting EIF2AK2/PKR, thereby reducing phosphorylation and inhibition of EIF2S1/eIF-2-alpha. May also promote translation of TAR-containing RNAs independently of EIF2AK2/PKR. Mediates recruitment of FTSJ3 methyltransferase to HIV-1 RNA, leading to 2'-O-methylation of the viral genome, allowing HIV-1 to escape the innate immune system. This chain is RISC-loading complex subunit TARBP2, found in Homo sapiens (Human).